We begin with the raw amino-acid sequence, 88 residues long: Fe-S protein maturation auxiliary factor SufT (88 aa).

Belongs to the MIP18 family.

In terms of biological role, involved in the maturation of iron-sulfur (Fe-S) proteins. May function as a Fe-S cluster carrier. Is required for S.aureus growth under conditions that impose a high demand for lipoic acid, likely via a role in the maturation of the lipoate synthase LipA. Is non-essential for growth in conditions that impose a low demand for lipoic acid or Fe-S clusters, such as fermentative growth. Also seems to be involved in the maturation of AcnA, LeuCD and IlvD proteins, that utilize Fe-S cluster cofactors, and its role increases under conditions of high-demand for Fe-S clusters (respiratory growth). Is not involved in the repair of Fe-S clusters damaged by reactive oxygen species or in the physical protection of Fe-S clusters from oxidants. Displays synergy with the Fe-S cluster carrier Nfu. This chain is Fe-S protein maturation auxiliary factor SufT, found in Staphylococcus aureus (strain USA300).